A 497-amino-acid polypeptide reads, in one-letter code: Glycerol kinase (497 aa).

T12 contacts ADP. T12, T13, and S14 together coordinate ATP. T12 contacts sn-glycerol 3-phosphate. R16 provides a ligand contact to ADP. Sn-glycerol 3-phosphate contacts are provided by R82, E83, Y134, and D243. 5 residues coordinate glycerol: R82, E83, Y134, D243, and Q244. The ADP site is built by T265 and G308. ATP-binding residues include T265, G308, Q312, and G409. ADP is bound by residues G409 and N413.

The protein belongs to the FGGY kinase family.

The enzyme catalyses glycerol + ATP = sn-glycerol 3-phosphate + ADP + H(+). Its pathway is polyol metabolism; glycerol degradation via glycerol kinase pathway; sn-glycerol 3-phosphate from glycerol: step 1/1. With respect to regulation, inhibited by fructose 1,6-bisphosphate (FBP). In terms of biological role, key enzyme in the regulation of glycerol uptake and metabolism. Catalyzes the phosphorylation of glycerol to yield sn-glycerol 3-phosphate. This is Glycerol kinase from Solidesulfovibrio magneticus (strain ATCC 700980 / DSM 13731 / RS-1) (Desulfovibrio magneticus).